Here is a 78-residue protein sequence, read N- to C-terminus: U7-lycotoxin-Ls1f (78 aa).

A signal peptide spans 1-22 (MKLIIFTGLALLLIVSLIDVEA). A propeptide spanning residues 23–26 (QNEG) is cleaved from the precursor.

It belongs to the neurotoxin 19 (CSTX) family. 07 (U7-Lctx) subfamily. In terms of processing, contains 4 disulfide bonds. Expressed by the venom gland.

Its subcellular location is the secreted. The sequence is that of U7-lycotoxin-Ls1f from Lycosa singoriensis (Wolf spider).